The sequence spans 485 residues: Glutamyl-tRNA(Gln) amidotransferase subunit A (485 aa).

Catalysis depends on charge relay system residues lysine 79 and serine 154. Serine 178 functions as the Acyl-ester intermediate in the catalytic mechanism.

The protein belongs to the amidase family. GatA subfamily. In terms of assembly, heterotrimer of A, B and C subunits.

It carries out the reaction L-glutamyl-tRNA(Gln) + L-glutamine + ATP + H2O = L-glutaminyl-tRNA(Gln) + L-glutamate + ADP + phosphate + H(+). Allows the formation of correctly charged Gln-tRNA(Gln) through the transamidation of misacylated Glu-tRNA(Gln) in organisms which lack glutaminyl-tRNA synthetase. The reaction takes place in the presence of glutamine and ATP through an activated gamma-phospho-Glu-tRNA(Gln). The chain is Glutamyl-tRNA(Gln) amidotransferase subunit A from Clostridium botulinum (strain Eklund 17B / Type B).